The sequence spans 65 residues: Small ribosomal subunit protein bS21 (65 aa).

The protein belongs to the bacterial ribosomal protein bS21 family.

The chain is Small ribosomal subunit protein bS21 from Cytophaga hutchinsonii (strain ATCC 33406 / DSM 1761 / CIP 103989 / NBRC 15051 / NCIMB 9469 / D465).